Reading from the N-terminus, the 253-residue chain is Trypsin beta (253 aa).

A signal peptide spans 1-22; the sequence is MLKFVILLSAVACALGGTIPEG. Residues 23–30 constitute a propeptide, activation peptide; it reads LLPQLDGR. In terms of domain architecture, Peptidase S1 spans 31–253; it reads IVGGTATTIS…DLRSWVINNA (223 aa). A disulfide bridge links C56 with C72. Active-site charge relay system residues include H71 and D116. Intrachain disulfides connect C180–C197 and C206–C230. S210 acts as the Charge relay system in catalysis.

It belongs to the peptidase S1 family.

The protein localises to the secreted. The protein resides in the extracellular space. It carries out the reaction Preferential cleavage: Arg-|-Xaa, Lys-|-Xaa.. The protein is Trypsin beta (betaTry) of Drosophila erecta (Fruit fly).